A 446-amino-acid chain; its full sequence is Histidine--tRNA ligase (446 aa).

Belongs to the class-II aminoacyl-tRNA synthetase family. As to quaternary structure, homodimer.

Its subcellular location is the cytoplasm. The catalysed reaction is tRNA(His) + L-histidine + ATP = L-histidyl-tRNA(His) + AMP + diphosphate + H(+). This Burkholderia cenocepacia (strain ATCC BAA-245 / DSM 16553 / LMG 16656 / NCTC 13227 / J2315 / CF5610) (Burkholderia cepacia (strain J2315)) protein is Histidine--tRNA ligase.